A 91-amino-acid polypeptide reads, in one-letter code: Small ribosomal subunit protein uS15 (91 aa).

The protein belongs to the universal ribosomal protein uS15 family. Part of the 30S ribosomal subunit. Forms a bridge to the 50S subunit in the 70S ribosome, contacting the 23S rRNA.

Its function is as follows. One of the primary rRNA binding proteins, it binds directly to 16S rRNA where it helps nucleate assembly of the platform of the 30S subunit by binding and bridging several RNA helices of the 16S rRNA. Forms an intersubunit bridge (bridge B4) with the 23S rRNA of the 50S subunit in the ribosome. This chain is Small ribosomal subunit protein uS15, found in Rickettsia typhi (strain ATCC VR-144 / Wilmington).